The chain runs to 282 residues: U1 small nuclear ribonucleoprotein A (282 aa).

Position 2 is an N-acetylalanine (A2). The RRM 1 domain occupies 10–89 (HTIYINNLNE…KPMRIQYAKT (80 aa)). K60 is subject to N6-acetyllysine. The interval 100–132 (TFVERDRKREKRKPKSQETPATKKAVQGGGATP) is disordered. T131 bears the Phosphothreonine mark. R152 is subject to Omega-N-methylarginine. One can recognise an RRM 2 domain in the interval 208–282 (HILFLTNLPE…NAMKISFAKK (75 aa)).

It belongs to the RRM U1 A/B'' family. As to quaternary structure, U1 snRNP is composed of the 7 core Sm proteins SNRPB, SNRPD1, SNRPD2, SNRPD3, SNRPE, SNRPF and SNRPG that assemble in a heptameric protein ring on the Sm site of the small nuclear RNA to form the core snRNP, and at least three U1 snRNP-specific proteins SNRNP70/U1-70K, SNRPA/U1-A and SNRPC/U1-C. Interacts with SFPQ; component of a snRNP-free complex with SFPQ. Interacts with IVNS1ABP (via BACK domain); the interaction is indirect.

It is found in the nucleus. In terms of biological role, component of the spliceosomal U1 snRNP, which is essential for recognition of the pre-mRNA 5' splice-site and the subsequent assembly of the spliceosome. U1 snRNP is the first snRNP to interact with pre-mRNA. This interaction is required for the subsequent binding of U2 snRNP and the U4/U6/U5 tri-snRNP. SNRPA binds stem loop II of U1 snRNA. In a snRNP-free form (SF-A) may be involved in coupled pre-mRNA splicing and polyadenylation process. May bind preferentially to the 5'-UGCAC-3' motif on RNAs. The protein is U1 small nuclear ribonucleoprotein A (SNRPA) of Homo sapiens (Human).